Consider the following 358-residue polypeptide: Histamine H2 receptor (358 aa).

Residues 1–22 (MEPNGTVHSCCLDSMALKVTIS) are Extracellular-facing. A glycan (N-linked (GlcNAc...) asparagine) is linked at Asn4. The helical transmembrane segment at 23 to 44 (VVLTTLILITIAGNVVVCLAVS) threads the bilayer. Topologically, residues 45–57 (LNRRLRSLTNCFI) are cytoplasmic. Residues 58–81 (VSLAATDLLLGLLVLPFSAIYQLS) traverse the membrane as a helical segment. At 82-92 (FTWSFGHVFCN) the chain is on the extracellular side. A disulfide bridge links Cys91 with Cys173. The helical transmembrane segment at 93–114 (IYTSLDVMLCTASILNLFMISL) threads the bilayer. Over 115-134 (DRYCAVTDPLRYPVLVTPVR) the chain is Cytoplasmic. A helical transmembrane segment spans residues 135–159 (VAISLVFIWVISITLSFLSIHLGWN). Residues 160–179 (SRNGTRGGNDTFKCKVQVNE) are Extracellular-facing. The helical transmembrane segment at 180–203 (VYGLVDGLVTFYLPLLIMCVTYYR) threads the bilayer. The Cytoplasmic segment spans residues 204 to 233 (IFKIAREQAKRINHISSWKAATIREHKATV). Residues 234–257 (TLAAVMGAFIICWFPYFTAFVYRG) traverse the membrane as a helical segment. At 258-266 (LRGDDAINE) the chain is on the extracellular side. The helical transmembrane segment at 267–288 (AVEGIVLWLGYANSALNPILYA) threads the bilayer. Over 289–358 (ALNRDFRTAY…LTHPQGNPIR (70 aa)) the chain is Cytoplasmic. A lipid anchor (S-palmitoyl cysteine) is attached at Cys304.

It belongs to the G-protein coupled receptor 1 family.

The protein resides in the cell membrane. The H2 subclass of histamine receptors mediates gastric acid secretion. The activity of this receptor is mediated by G proteins which activate adenylyl cyclase. The polypeptide is Histamine H2 receptor (Hrh2) (Rattus norvegicus (Rat)).